Consider the following 445-residue polypeptide: Rab GDP dissociation inhibitor beta (445 aa).

N-acetylmethionine is present on Met1. Lys112 bears the N6-acetyllysine mark. Ser130 is subject to Phosphoserine. Lys269 is subject to N6-acetyllysine. Ser382 carries the phosphoserine modification.

The protein belongs to the Rab GDI family. As to quaternary structure, interacts with RHOH. Interacts with the GDP-bound inactive forms of RAB3A, RAB3B, RAB3C, RAB5A, RAB5B, RAB5C, RAB8A, RAB8B, RAB10, RAB12, RAB35, and RAB43; binds RAB3D to a lesser extent. Interacts with DZIP1; this interaction negatively regulates the interaction of GDI2 with GDP-bound RAB8A.

The protein localises to the cytoplasm. It localises to the membrane. Its subcellular location is the golgi apparatus. It is found in the trans-Golgi network. Its function is as follows. GDP-dissociation inhibitor preventing the GDP to GTP exchange of most Rab proteins. By keeping these small GTPases in their inactive GDP-bound form regulates intracellular membrane trafficking. Negatively regulates protein transport to the cilium and ciliogenesis through the inhibition of RAB8A. The chain is Rab GDP dissociation inhibitor beta (GDI2) from Sus scrofa (Pig).